Reading from the N-terminus, the 777-residue chain is Type IV pilus biogenesis and competence protein PilQ (777 aa).

Residues 1–24 form the signal peptide; the sequence is MNTKLTKIISGLFVATAAFQTASA. Low complexity-rich tracts occupy residues 135–154 and 197–233; these read ARPA…AAAP and ASAK…PAKQ. Disordered regions lie at residues 135 to 156 and 197 to 236; these read ARPA…APST and ASAK…QTNI.

Belongs to the bacterial secretin family. PilQ subfamily. In terms of assembly, homododecamer. Tetramer of trimer.

It localises to the cell outer membrane. Functionally, required for type IV pilus biogenesis and competence. Could function as a pore for exit of the pilus but also as a channel for entry of heme and antimicrobial agents and uptake of transforming DNA. The sequence is that of Type IV pilus biogenesis and competence protein PilQ (pilQ) from Neisseria meningitidis serogroup B / serotype 15 (strain H44/76).